The primary structure comprises 419 residues: Creatine kinase S-type, mitochondrial (419 aa).

Residues 1–39 (MASAFSKLLTGRNASLLFTTLGTSALTTGYLLNRQKVSA) constitute a mitochondrion transit peptide. Positions 40 to 64 (DAREQHKLFPPSADYPDLRKHNNCM) are cardiolipin-binding. Residues 46-132 (KLFPPSADYP…FDPVIKLRHN (87 aa)) form the Phosphagen kinase N-terminal domain. Residues 159–401 (YVLSSRVRTG…NYLVDCEKKL (243 aa)) form the Phosphagen kinase C-terminal domain. Residues 162–166 (SSRVR) and H225 each bind ATP. Y255 is subject to Phosphotyrosine. ATP is bound by residues R270, R326, 354 to 359 (RGTGGV), and D369. A Phosphothreonine modification is found at T356.

This sequence belongs to the ATP:guanido phosphotransferase family. As to quaternary structure, exists as an octamer composed of four CKMT2 homodimers.

The protein resides in the mitochondrion inner membrane. The catalysed reaction is creatine + ATP = N-phosphocreatine + ADP + H(+). Its function is as follows. Reversibly catalyzes the transfer of phosphate between ATP and various phosphogens (e.g. creatine phosphate). Creatine kinase isoenzymes play a central role in energy transduction in tissues with large, fluctuating energy demands, such as skeletal muscle, heart, brain and spermatozoa. The chain is Creatine kinase S-type, mitochondrial (Ckmt2) from Mus musculus (Mouse).